The sequence spans 139 residues: Nucleoside diphosphate kinase (139 aa).

The ATP site is built by K11, F59, R87, T93, R104, and N114. H117 (pros-phosphohistidine intermediate) is an active-site residue.

This sequence belongs to the NDK family. As to quaternary structure, homotetramer. It depends on Mg(2+) as a cofactor.

It is found in the cytoplasm. It carries out the reaction a 2'-deoxyribonucleoside 5'-diphosphate + ATP = a 2'-deoxyribonucleoside 5'-triphosphate + ADP. The enzyme catalyses a ribonucleoside 5'-diphosphate + ATP = a ribonucleoside 5'-triphosphate + ADP. In terms of biological role, major role in the synthesis of nucleoside triphosphates other than ATP. The ATP gamma phosphate is transferred to the NDP beta phosphate via a ping-pong mechanism, using a phosphorylated active-site intermediate. The chain is Nucleoside diphosphate kinase from Moorella thermoacetica (strain ATCC 39073 / JCM 9320).